We begin with the raw amino-acid sequence, 291 residues long: Protease HtpX (291 aa).

A run of 2 helical transmembrane segments spans residues 4-24 and 36-56; these read IALF…VLNI and LSGL…ISLM. Histidine 143 contributes to the Zn(2+) binding site. The active site involves glutamate 144. Residue histidine 147 coordinates Zn(2+). 2 helical membrane passes run 151–171 and 199–219; these read GDMI…IFLS and FIVS…LTMW. Glutamate 225 lines the Zn(2+) pocket.

This sequence belongs to the peptidase M48B family. It depends on Zn(2+) as a cofactor.

The protein localises to the cell inner membrane. This chain is Protease HtpX, found in Aliivibrio fischeri (strain ATCC 700601 / ES114) (Vibrio fischeri).